The primary structure comprises 554 residues: Dihydroxy-acid dehydratase (554 aa).

Aspartate 78 is a binding site for Mg(2+). A [2Fe-2S] cluster-binding site is contributed by cysteine 119. Mg(2+) is bound by residues aspartate 120 and lysine 121. N6-carboxylysine is present on lysine 121. Cysteine 191 is a binding site for [2Fe-2S] cluster. Glutamate 444 is a Mg(2+) binding site. Residue serine 470 is the Proton acceptor of the active site.

The protein belongs to the IlvD/Edd family. In terms of assembly, homodimer. The cofactor is [2Fe-2S] cluster. Requires Mg(2+) as cofactor.

The enzyme catalyses (2R)-2,3-dihydroxy-3-methylbutanoate = 3-methyl-2-oxobutanoate + H2O. It catalyses the reaction (2R,3R)-2,3-dihydroxy-3-methylpentanoate = (S)-3-methyl-2-oxopentanoate + H2O. It functions in the pathway amino-acid biosynthesis; L-isoleucine biosynthesis; L-isoleucine from 2-oxobutanoate: step 3/4. It participates in amino-acid biosynthesis; L-valine biosynthesis; L-valine from pyruvate: step 3/4. In terms of biological role, functions in the biosynthesis of branched-chain amino acids. Catalyzes the dehydration of (2R,3R)-2,3-dihydroxy-3-methylpentanoate (2,3-dihydroxy-3-methylvalerate) into 2-oxo-3-methylpentanoate (2-oxo-3-methylvalerate) and of (2R)-2,3-dihydroxy-3-methylbutanoate (2,3-dihydroxyisovalerate) into 2-oxo-3-methylbutanoate (2-oxoisovalerate), the penultimate precursor to L-isoleucine and L-valine, respectively. This Nitratidesulfovibrio vulgaris (strain DP4) (Desulfovibrio vulgaris) protein is Dihydroxy-acid dehydratase.